We begin with the raw amino-acid sequence, 607 residues long: Acyl-coenzyme A thioesterase 11 (607 aa).

A mitochondrion-targeting transit peptide spans 1-13 (MIQNVGNHLRRGL). A phosphoserine mark is found at S15 and S25. The HotDog ACOT-type 1 domain occupies 43–155 (NPTEVQMSQL…LATFVARREI (113 aa)). CoA contacts are provided by residues 91-93 (TAS), 120-122 (NSS), R181, and 271-273 (HFR). One can recognise a HotDog ACOT-type 2 domain in the interval 216 to 329 (EKTRVESVEL…FMTFVVLDAD (114 aa)). The 211-residue stretch at 375–585 (LSVPWDPSNQ…GWNGKLAGGH (211 aa)) folds into the START domain.

As to expression, isoform 1 is predominantly expressed in skeletal muscle, liver, testis, stomach, spleen, lung and brain. Isoform 2 is predominantly expressed in kidney, uterus, hibernoma and white adipose tissue.

Its subcellular location is the mitochondrion matrix. The protein localises to the cytoplasm. The catalysed reaction is hexadecanoyl-CoA + H2O = hexadecanoate + CoA + H(+). It carries out the reaction tetradecanoyl-CoA + H2O = tetradecanoate + CoA + H(+). The enzyme catalyses dodecanoyl-CoA + H2O = dodecanoate + CoA + H(+). It catalyses the reaction butanoyl-CoA + H2O = butanoate + CoA + H(+). The protein operates within lipid metabolism; fatty acid metabolism. In terms of biological role, has an acyl-CoA thioesterase activity with a preference for the long chain fatty acyl-CoA thioesters hexadecanoyl-CoA/palmitoyl-CoA and tetradecanoyl-CoA/myristoyl-CoA which are the main substrates in the mitochondrial beta-oxidation pathway. This is Acyl-coenzyme A thioesterase 11 (ACOT11) from Homo sapiens (Human).